A 1151-amino-acid polypeptide reads, in one-letter code: Zinc finger protein ZFPM2 (1151 aa).

A compositionally biased stretch (basic residues) spans 1–13; the sequence is MSRRKQSKPRQIK. Residues 1–102 are disordered; it reads MSRRKQSKPR…ETDDWDGPGE (102 aa). 2 stretches are compositionally biased toward acidic residues: residues 18–33 and 70–82; these read DAIEDEEEECPSEETD and EGIQETAESDGDT. A CCHC FOG-type 1 zinc finger spans residues 244 to 277; that stretch reads IVNKDIFPCKSCGIWYRSERNLQAHLMYYCSGRQ. Zn(2+) contacts are provided by C252, C255, H268, and C273. The C2H2-type 1 zinc finger occupies 296–320; sequence SLCPFPQCTKSFSNARALEMHLNSH. K324 participates in a covalent cross-link: Glycyl lysine isopeptide (Lys-Gly) (interchain with G-Cter in SUMO1). 2 consecutive C2H2-type zinc fingers follow at residues 335 to 357 and 363 to 385; these read LKCTVCSYTADSVINFHQHLFSH and FRCNHCHFGFQTQRELLQHQELH. A disordered region spans residues 389-487; that stretch reads GKLPRESDME…RLASSPVQPN (99 aa). Polar residues-rich tracts occupy residues 401-410 and 419-431; these read PSATEDSLQP and ELPQSQKAMQTKD. K444 participates in a covalent cross-link: Glycyl lysine isopeptide (Lys-Gly) (interchain with G-Cter in SUMO2). A compositionally biased stretch (polar residues) spans 447 to 485; it reads LFLTNQRPEIQPTTNKQSFSYTKIKSEPSSPRLASSPVQ. K471 is covalently cross-linked (Glycyl lysine isopeptide (Lys-Gly) (interchain with G-Cter in SUMO1)). Residue S532 is modified to Phosphoserine. A CCHC FOG-type 2 zinc finger spans residues 542–575; sequence PLMPKGATCFECNITFNNLDNYLVHKKHYCSSRW. Residues C550, C553, H566, and C571 each contribute to the Zn(2+) site. At S581 the chain carries Phosphoserine. A disordered region spans residues 636-683; sequence GPNGKGHDKDFSTQTKKLSTSSNNDDKINGKPVDVKNPSVPLVDGESD. Polar residues predominate over residues 647–658; sequence STQTKKLSTSSN. Residues 681–714 form a CCHC FOG-type 3 zinc finger; that stretch reads ESDPNKTTCEACNITFSRHETYMVHKQYYCATRH. 4 residues coordinate Zn(2+): C689, C692, H705, and C710. Residues 736 to 740 carry the Nuclear localization signal motif; the sequence is RKRRK. The tract at residues 829-835 is interaction with CTBP2; that stretch reads PIDLSKK. A CCHC FOG-type 4 zinc finger spans residues 848 to 881; that stretch reads KRLLDYHECTVCKISFNKVENYLAHKQNFCPVTA. Residues C856, C859, H872, and C877 each contribute to the Zn(2+) site. The residue at position 904 (S904) is a Phosphoserine. Residues K915 and K955 each participate in a glycyl lysine isopeptide (Lys-Gly) (interchain with G-Cter in SUMO1) cross-link. S1014 carries the post-translational modification Phosphoserine. The segment at 1051-1095 is disordered; the sequence is DERPAANPQQENISQNPQHEDDHKSPSWISENPLAANENVSPGIP. A compositionally biased stretch (polar residues) spans 1057-1067; the sequence is NPQQENISQNP. The CCHC FOG-type 5 zinc finger occupies 1113–1146; sequence QAPTSGKYCRLCDIQFNNLSNFITHKKFYCSSHA. Residues C1121, C1124, H1137, and C1142 each coordinate Zn(2+).

Belongs to the FOG (Friend of GATA) family. In terms of assembly, interacts with the N-terminal zinc-finger of GATA4, GATA5 and probably GATA6. Interacts with retinoid nuclear receptor RXRA when ligand bound. Interacts with corepressor CTBP2; this interaction is however not essential for corepressor activity. Able to bind GATA1 in vitro. Interacts with NR2F2 and NR2F6. Interacts with ATOH8; mediates indirect interaction with GATA4. In terms of processing, sumoylation reduces transcriptional repression activity. As to expression, widely expressed at low level.

The protein localises to the nucleus. Functionally, transcription regulator that plays a central role in heart morphogenesis and development of coronary vessels from epicardium, by regulating genes that are essential during cardiogenesis. Essential cofactor that acts via the formation of a heterodimer with transcription factors of the GATA family GATA4, GATA5 and GATA6. Such heterodimer can both activate or repress transcriptional activity, depending on the cell and promoter context. Also required in gonadal differentiation, possibly be regulating expression of SRY. Probably acts a corepressor of NR2F2. The chain is Zinc finger protein ZFPM2 (ZFPM2) from Homo sapiens (Human).